Here is a 439-residue protein sequence, read N- to C-terminus: Ribosomal protein uS12 methylthiotransferase RimO (439 aa).

The MTTase N-terminal domain maps to 5-115 (PRISFTSLGC…VLDAVHRALP (111 aa)). The [4Fe-4S] cluster site is built by Cys14, Cys50, Cys79, Cys146, Cys150, and Cys153. The Radical SAM core domain maps to 132-369 (LTPRHYAYLK…MARQQKISAR (238 aa)). The TRAM domain occupies 372–438 (KRKVGTRQQI…QYDLHGSVAG (67 aa)).

The protein belongs to the methylthiotransferase family. RimO subfamily. The cofactor is [4Fe-4S] cluster.

Its subcellular location is the cytoplasm. It catalyses the reaction L-aspartate(89)-[ribosomal protein uS12]-hydrogen + (sulfur carrier)-SH + AH2 + 2 S-adenosyl-L-methionine = 3-methylsulfanyl-L-aspartate(89)-[ribosomal protein uS12]-hydrogen + (sulfur carrier)-H + 5'-deoxyadenosine + L-methionine + A + S-adenosyl-L-homocysteine + 2 H(+). In terms of biological role, catalyzes the methylthiolation of an aspartic acid residue of ribosomal protein uS12. The chain is Ribosomal protein uS12 methylthiotransferase RimO from Bradyrhizobium diazoefficiens (strain JCM 10833 / BCRC 13528 / IAM 13628 / NBRC 14792 / USDA 110).